We begin with the raw amino-acid sequence, 952 residues long: Serine/threonine-protein kinase atg1 (952 aa).

The region spanning 23–329 (FTINEQIGKG…FPEYFAHPVV (307 aa)) is the Protein kinase domain. ATP contacts are provided by residues 29–37 (IGKGSFATV) and Lys52. Asp166 acts as the Proton acceptor in catalysis. Disordered stretches follow at residues 331–478 (EPIP…EAEQ), 510–573 (GRAN…SSPS), 783–806 (RLPE…GGSS), and 920–952 (AIAK…TPPK). 2 stretches are compositionally biased toward basic and acidic residues: residues 338–347 (GDDRPKEKSP) and 356–372 (SLRD…HIDT). Polar residues predominate over residues 386–398 (SPRTPNIESNQPF). Positions 429-439 (PRQRDRKDRTE) are enriched in basic and acidic residues. 3 stretches are compositionally biased toward polar residues: residues 459–475 (ANLQ…SITE), 553–573 (PDTS…SSPS), and 793–806 (NNRS…GGSS). The segment covering 933-952 (SPRRSYSGGTTPTINNTPPK) has biased composition (low complexity).

It belongs to the protein kinase superfamily. Ser/Thr protein kinase family. APG1/unc-51/ULK1 subfamily. As to quaternary structure, homodimer. Forms a ternary complex with ATG13 and ATG17.

It is found in the cytoplasm. The protein resides in the preautophagosomal structure membrane. It catalyses the reaction L-seryl-[protein] + ATP = O-phospho-L-seryl-[protein] + ADP + H(+). The catalysed reaction is L-threonyl-[protein] + ATP = O-phospho-L-threonyl-[protein] + ADP + H(+). Functionally, serine/threonine protein kinase involved in the cytoplasm to vacuole transport (Cvt) and found to be essential in autophagy, where it is required for the formation of autophagosomes. Involved in the clearance of protein aggregates which cannot be efficiently cleared by the proteasome. Required for selective autophagic degradation of the nucleus (nucleophagy) as well as for mitophagy which contributes to regulate mitochondrial quantity and quality by eliminating the mitochondria to a basal level to fulfill cellular energy requirements and preventing excess ROS production. Also involved in endoplasmic reticulum-specific autophagic process, in selective removal of ER-associated degradation (ERAD) substrates. Plays a key role in ATG9 and ATG23 cycling through the pre-autophagosomal structure and is necessary to promote ATG18 binding to ATG9 through phosphorylation of ATG9. Catalyzes phosphorylation of ATG4, decreasing the interaction between ATG4 and ATG8 and impairing deconjugation of PE-conjugated forms of ATG8. The sequence is that of Serine/threonine-protein kinase atg1 from Botryotinia fuckeliana (strain B05.10) (Noble rot fungus).